Consider the following 506-residue polypeptide: ATP synthase subunit alpha (506 aa).

169-176 (GDRQTGKT) provides a ligand contact to ATP.

Belongs to the ATPase alpha/beta chains family. F-type ATPases have 2 components, CF(1) - the catalytic core - and CF(0) - the membrane proton channel. CF(1) has five subunits: alpha(3), beta(3), gamma(1), delta(1), epsilon(1). CF(0) has three main subunits: a(1), b(2) and c(9-12). The alpha and beta chains form an alternating ring which encloses part of the gamma chain. CF(1) is attached to CF(0) by a central stalk formed by the gamma and epsilon chains, while a peripheral stalk is formed by the delta and b chains.

Its subcellular location is the cell membrane. The catalysed reaction is ATP + H2O + 4 H(+)(in) = ADP + phosphate + 5 H(+)(out). Functionally, produces ATP from ADP in the presence of a proton gradient across the membrane. The alpha chain is a regulatory subunit. This chain is ATP synthase subunit alpha, found in Lawsonia intracellularis (strain PHE/MN1-00).